An 85-amino-acid polypeptide reads, in one-letter code: Small ribosomal subunit protein uS17 (85 aa).

Belongs to the universal ribosomal protein uS17 family. Part of the 30S ribosomal subunit.

In terms of biological role, one of the primary rRNA binding proteins, it binds specifically to the 5'-end of 16S ribosomal RNA. The chain is Small ribosomal subunit protein uS17 from Desulforapulum autotrophicum (strain ATCC 43914 / DSM 3382 / VKM B-1955 / HRM2) (Desulfobacterium autotrophicum).